A 365-amino-acid chain; its full sequence is Chloroplast protein FOR GROWTH AND FERTILITY 1 (365 aa).

Disordered stretches follow at residues 1 to 30 and 62 to 90; these read MERL…LPRL and YTPI…PGFL. Residues 1-79 constitute a chloroplast transit peptide; the sequence is MERLLQPSSS…TNNSFNGSPK (79 aa). Composition is skewed to low complexity over residues 7-24 and 62-77; these read PSSS…SRTS and YTPI…FNGS. 7 helical membrane passes run 109 to 129, 139 to 159, 182 to 202, 218 to 238, 274 to 294, 301 to 321, and 345 to 365; these read VILI…PPAF, GWLT…LSGP, ALWG…FLLL, IVGL…SEIP, GVVH…LALP, AFLI…TAFI, and LVAI…FSLY.

Mostly expressed in leaves and flowers, to a lower extent, in stems, roots, floral bud, inflorescence and siliques, and, barely, in seedlings.

It is found in the plastid. Its subcellular location is the chloroplast membrane. It localises to the plastid membrane. Functionally, together with CGF2, essential protein which supports female gametogenesis and embryogenesis, probably by securing local energy supply. This chain is Chloroplast protein FOR GROWTH AND FERTILITY 1, found in Arabidopsis thaliana (Mouse-ear cress).